Here is a 383-residue protein sequence, read N- to C-terminus: Dual-specificity RNA methyltransferase RlmN (383 aa).

The active-site Proton acceptor is the Glu93. The Radical SAM core domain maps to 99-339 (EETRGTLCVS…TTIRKTRGDD (241 aa)). Cysteines 106 and 344 form a disulfide. Residues Cys113, Cys117, and Cys120 each coordinate [4Fe-4S] cluster. S-adenosyl-L-methionine is bound by residues 170–171 (GE), Ser202, 224–226 (SLH), and Asn301. Residue Cys344 is the S-methylcysteine intermediate of the active site.

It belongs to the radical SAM superfamily. RlmN family. [4Fe-4S] cluster serves as cofactor.

It is found in the cytoplasm. It carries out the reaction adenosine(2503) in 23S rRNA + 2 reduced [2Fe-2S]-[ferredoxin] + 2 S-adenosyl-L-methionine = 2-methyladenosine(2503) in 23S rRNA + 5'-deoxyadenosine + L-methionine + 2 oxidized [2Fe-2S]-[ferredoxin] + S-adenosyl-L-homocysteine. The catalysed reaction is adenosine(37) in tRNA + 2 reduced [2Fe-2S]-[ferredoxin] + 2 S-adenosyl-L-methionine = 2-methyladenosine(37) in tRNA + 5'-deoxyadenosine + L-methionine + 2 oxidized [2Fe-2S]-[ferredoxin] + S-adenosyl-L-homocysteine. In terms of biological role, specifically methylates position 2 of adenine 2503 in 23S rRNA and position 2 of adenine 37 in tRNAs. m2A2503 modification seems to play a crucial role in the proofreading step occurring at the peptidyl transferase center and thus would serve to optimize ribosomal fidelity. This Ralstonia nicotianae (strain ATCC BAA-1114 / GMI1000) (Ralstonia solanacearum) protein is Dual-specificity RNA methyltransferase RlmN.